We begin with the raw amino-acid sequence, 369 residues long: Flagellar P-ring protein (369 aa).

A signal peptide spans 1–22 (MIKLKQLIAATLLLSTAFGVHA).

This sequence belongs to the FlgI family. As to quaternary structure, the basal body constitutes a major portion of the flagellar organelle and consists of four rings (L,P,S, and M) mounted on a central rod.

It is found in the periplasm. It localises to the bacterial flagellum basal body. Assembles around the rod to form the L-ring and probably protects the motor/basal body from shearing forces during rotation. The chain is Flagellar P-ring protein from Pseudomonas savastanoi pv. phaseolicola (strain 1448A / Race 6) (Pseudomonas syringae pv. phaseolicola (strain 1448A / Race 6)).